The sequence spans 69 residues: MNKDEAGGNWKQFKGKVKEQWGKLTDDDMTIIEGKRDQLVGKIQERYGYQKDQAEKEVVDWETRNEYRW.

Belongs to the UPF0337 (CsbD) family.

The polypeptide is UPF0337 protein YjbJ (yjbJ) (Escherichia coli O157:H7).